The chain runs to 450 residues: CBL-interacting protein kinase 23 (450 aa).

The 256-residue stretch at 13–268 (YELGRTLGEG…IAELINNEWF (256 aa)) folds into the Protein kinase domain. ATP contacts are provided by residues 19–27 (LGEGTFAKV) and lysine 42. The Proton acceptor role is filled by aspartate 136. Residues 154–183 (DFGLSALSQQVREDGLLHTTCGTPNYVAPE) are activation loop. One can recognise an NAF domain in the interval 306 to 331 (EERPSVMNAFELISTSQGLNLGTLFE). A PPI region spans residues 339 to 368 (KRETRFASRLPANEILSKIEAAAGPMGFNV).

This sequence belongs to the protein kinase superfamily. CAMK Ser/Thr protein kinase family. SNF1 subfamily. Requires Mn(2+) as cofactor.

It carries out the reaction L-seryl-[protein] + ATP = O-phospho-L-seryl-[protein] + ADP + H(+). The enzyme catalyses L-threonyl-[protein] + ATP = O-phospho-L-threonyl-[protein] + ADP + H(+). CIPK serine-threonine protein kinases interact with CBL proteins. Binding of a CBL protein to the regulatory NAF domain of CIPK protein lead to the activation of the kinase in a calcium-dependent manner. In Oryza sativa subsp. japonica (Rice), this protein is CBL-interacting protein kinase 23 (CIPK23).